A 356-amino-acid polypeptide reads, in one-letter code: MKFLDQAKVYIRSGGGGAGCVSFRREKFVEYGGPDGGDGGRGGDVWIEAVEGLNTLIDFRYQQHFKAARGGHGMGKQRTGARGEDAVLKVPVGTQIYEEDQETMIADLTEVGQRVLLAPGGNGGWGNLRFKSSINQAPRRSNPGEEGEERWIWLRLKLIADAGLVGLPNAGKSTFLSVATAANPKIADYPFTTLHPGLGVVDLGTSTRFVLADIPGLIEGAAEGAGLGHRFLGHVERCKVLLHLIDCTQDDPAGAYRTIRSELEAYDADFADRPEIVALNKIDALTPELVKEQLKQLKKVYKGKPLLISGVTGAGVKDALYAIAQHLGFNNDDIPLPKPSNADEEDPDTDQPWSPV.

The Obg domain occupies 1 to 159 (MKFLDQAKVY…RWIWLRLKLI (159 aa)). The OBG-type G domain maps to 160-328 (ADAGLVGLPN…ALYAIAQHLG (169 aa)). GTP-binding positions include 166–173 (GLPNAGKS), 191–195 (FTTLH), 213–216 (DIPG), 280–283 (NKID), and 309–311 (SGV). 2 residues coordinate Mg(2+): S173 and T193. Residues 333–356 (DIPLPKPSNADEEDPDTDQPWSPV) form a disordered region.

It belongs to the TRAFAC class OBG-HflX-like GTPase superfamily. OBG GTPase family. Monomer. It depends on Mg(2+) as a cofactor.

The protein localises to the cytoplasm. In terms of biological role, an essential GTPase which binds GTP, GDP and possibly (p)ppGpp with moderate affinity, with high nucleotide exchange rates and a fairly low GTP hydrolysis rate. Plays a role in control of the cell cycle, stress response, ribosome biogenesis and in those bacteria that undergo differentiation, in morphogenesis control. This chain is GTPase Obg, found in Hyphomonas neptunium (strain ATCC 15444).